The following is a 462-amino-acid chain: tRNA modification GTPase MnmE (462 aa).

Residues Arg27, Glu89, and Arg128 each contribute to the (6S)-5-formyl-5,6,7,8-tetrahydrofolate site. Positions 224-383 constitute a TrmE-type G domain; sequence GLATAIVGRP…LDERIAKLFF (160 aa). Asn234 provides a ligand contact to K(+). GTP-binding positions include 234-239, 253-259, and 278-281; these read NVGKSS, TDVAGTT, and DTAG. Mg(2+) is bound at residue Ser238. The K(+) site is built by Thr253, Val255, and Thr258. Thr259 lines the Mg(2+) pocket. Position 462 (Lys462) interacts with (6S)-5-formyl-5,6,7,8-tetrahydrofolate.

It belongs to the TRAFAC class TrmE-Era-EngA-EngB-Septin-like GTPase superfamily. TrmE GTPase family. Homodimer. Heterotetramer of two MnmE and two MnmG subunits. The cofactor is K(+).

It is found in the cytoplasm. Functionally, exhibits a very high intrinsic GTPase hydrolysis rate. Involved in the addition of a carboxymethylaminomethyl (cmnm) group at the wobble position (U34) of certain tRNAs, forming tRNA-cmnm(5)s(2)U34. In Lacticaseibacillus paracasei (strain ATCC 334 / BCRC 17002 / CCUG 31169 / CIP 107868 / KCTC 3260 / NRRL B-441) (Lactobacillus paracasei), this protein is tRNA modification GTPase MnmE.